The primary structure comprises 464 residues: MAHVRHFRTLVSGFYFWEAALLLSLVATKETDSARSRSAPMSPSDFLDKLMGRTSGYDARIRPNFKGPPVNVTCNIFINSFGSIAETTMDYRVNIFLRQKWNDPRLAYSEYPDDSLDLDPSMLDSIWKPDLFFANEKGANFHEVTTDNKLLRIFKNGNVLYSIRLTLTLSCPMDLKNFPMDVQTCIMQLESFGYTMNDLIFEWQDEAPVQVAEGLTLPQFLLKEEKDLRYCTKHYNTGKFTCIEVRFHLERQMGYYLIQMYIPSLLIVILSWVSFWINMDAAPARVALGITTVLTMTTQSSGSRASLPKVSYVKAIDIWMAVCLLFVFSALLEYAAVNFVSRQHKELLRFRRKRKNKTEAFALEKFYRFSDMDDEVRESRFSFTAYGMGPCLQAKDGMTPKGPNHPVQVMPKSPDEMRKVFIDRAKKIDTISRACFPLAFLIFNIFYWVIYKILRHEDIHQQQD.

The first 33 residues, 1-33 (MAHVRHFRTLVSGFYFWEAALLLSLVATKETDS), serve as a signal peptide directing secretion. The Extracellular portion of the chain corresponds to 34 to 255 (ARSRSAPMSP…RFHLERQMGY (222 aa)). Asn-71 carries an N-linked (GlcNAc...) asparagine glycan. An intrachain disulfide couples Cys-171 to Cys-185. Zn(2+) contacts are provided by Glu-225 and Asp-227. Cysteines 231 and 242 form a disulfide. 235–240 (YNTGKF) provides a ligand contact to strychnine. Residue His-248 participates in Zn(2+) binding. The chain crosses the membrane as a helical span at residues 256–277 (YLIQMYIPSLLIVILSWVSFWI). Residues 278-282 (NMDAA) lie on the Cytoplasmic side of the membrane. A helical membrane pass occupies residues 283–303 (PARVALGITTVLTMTTQSSGS). Topologically, residues 304–314 (RASLPKVSYVK) are extracellular. The helical transmembrane segment at 315-335 (AIDIWMAVCLLFVFSALLEYA) threads the bilayer. The Cytoplasmic segment spans residues 336 to 430 (AVNFVSRQHK…FIDRAKKIDT (95 aa)). 2 positions are modified to phosphoserine: Ser-370 and Ser-379. A helical membrane pass occupies residues 431 to 451 (ISRACFPLAFLIFNIFYWVIY). Residues 452 to 464 (KILRHEDIHQQQD) are Extracellular-facing.

Belongs to the ligand-gated ion channel (TC 1.A.9) family. Glycine receptor (TC 1.A.9.3) subfamily. GLRA3 sub-subfamily. In terms of assembly, homopentamer (in vitro). Heteropentamer composed of GLRA3 and GLRB. Both homopentamers and heteropentamers form functional ion channels, but their characteristics are subtly different. Phosphorylated by PKA; this causes down-regulation of channel activity. As to expression, widely distributed throughout the central nervous system.

Its subcellular location is the postsynaptic cell membrane. It localises to the perikaryon. The protein localises to the cell projection. It is found in the dendrite. The protein resides in the synapse. Its subcellular location is the cell membrane. It carries out the reaction chloride(in) = chloride(out). Functionally, glycine receptors are ligand-gated chloride channels. Channel opening is triggered by extracellular glycine. Channel characteristics depend on the subunit composition; heteropentameric channels display faster channel closure. Plays an important role in the down-regulation of neuronal excitability. Contributes to the generation of inhibitory postsynaptic currents. Contributes to increased pain perception in response to increased prostaglandin E2 levels. Plays a role in cellular responses to ethanol. The sequence is that of Glycine receptor subunit alpha-3 (GLRA3) from Homo sapiens (Human).